Reading from the N-terminus, the 977-residue chain is AP-2 complex subunit alpha-1 (977 aa).

Residues 614 to 702 form a disordered region; that stretch reads AKLKRKKGPG…PSLGPTPEEA (89 aa). Ser626 and Ser652 each carry phosphoserine. Residues 646–657 are compositionally biased toward low complexity; that stretch reads PTPSTVSTPSPS. Thr653 carries the post-translational modification Phosphothreonine. Ser655 bears the Phosphoserine mark. The segment covering 666-675 has biased composition (pro residues); sequence APPPAAPPAP.

This sequence belongs to the adaptor complexes large subunit family. As to quaternary structure, adaptor protein complex 2 (AP-2) is a heterotetramer composed of two large adaptins (alpha-type subunit AP2A1 or AP2A2 and beta-type subunit AP2B1), a medium adaptin (mu-type subunit AP2M1) and a small adaptin (sigma-type subunit AP2S1). Interacts with HIP1 and RAB11FIP2. Interacts with SLC12A5. Interacts with clathrin. Interacts with SGIP1. Interacts with RFTN1. Interacts with KIAA1107. Interacts with PICALM. Together with AP2B1 and AP2M1, it interacts with ADAM10; this interaction facilitates ADAM10 endocytosis from the plasma membrane during long-term potentiation in hippocampal neurons. Interacts with ABCB11; this interaction regulates cell membrane expression of ABCB11 through its internalization in a clathrin-dependent manner and its subsequent degradation. Probably interacts with ACE2 (via endocytic sorting signal motif); the interaction is inhibited by ACE2 phosphorylation. Expressed in the brain (at protein level). Isoform A: Expressed only in neuronal tissue and skeletal muscle. Isoform B: Widely expressed.

The protein localises to the cell membrane. Its subcellular location is the membrane. It is found in the coated pit. Its function is as follows. Component of the adaptor protein complex 2 (AP-2). Adaptor protein complexes function in protein transport via transport vesicles in different membrane traffic pathways. Adaptor protein complexes are vesicle coat components and appear to be involved in cargo selection and vesicle formation. AP-2 is involved in clathrin-dependent endocytosis in which cargo proteins are incorporated into vesicles surrounded by clathrin (clathrin-coated vesicles, CCVs) which are destined for fusion with the early endosome. The clathrin lattice serves as a mechanical scaffold but is itself unable to bind directly to membrane components. Clathrin-associated adaptor protein (AP) complexes which can bind directly to both the clathrin lattice and to the lipid and protein components of membranes are considered to be the major clathrin adaptors contributing the CCV formation. AP-2 also serves as a cargo receptor to selectively sort the membrane proteins involved in receptor-mediated endocytosis. AP-2 seems to play a role in the recycling of synaptic vesicle membranes from the presynaptic surface. AP-2 recognizes Y-X-X-[FILMV] (Y-X-X-Phi) and [ED]-X-X-X-L-[LI] endocytosis signal motifs within the cytosolic tails of transmembrane cargo molecules. AP-2 may also play a role in maintaining normal post-endocytic trafficking through the ARF6-regulated, non-clathrin pathway. The AP-2 alpha subunit binds polyphosphoinositide-containing lipids, positioning AP-2 on the membrane. During long-term potentiation in hippocampal neurons, AP-2 is responsible for the endocytosis of ADAM10. The AP-2 alpha subunit acts via its C-terminal appendage domain as a scaffolding platform for endocytic accessory proteins. The AP-2 alpha and AP-2 sigma subunits are thought to contribute to the recognition of the [ED]-X-X-X-L-[LI] motif. This chain is AP-2 complex subunit alpha-1 (Ap2a1), found in Mus musculus (Mouse).